A 389-amino-acid polypeptide reads, in one-letter code: SH2 domain-containing protein 2A (389 aa).

The segment at Ala-41–Pro-63 is disordered. The region spanning Trp-95–Leu-186 is the SH2 domain. The segment at Thr-190–Gly-295 is disordered. Polar residues predominate over residues Ser-203–Tyr-216. Phosphoserine is present on Ser-217. 2 consecutive short sequence motifs (SH3-binding) follow at residues Arg-244 to Pro-250 and Arg-272 to Pro-278. Residues Pro-245–Pro-256 show a composition bias toward pro residues. Ser-296 bears the Phosphoserine mark. The tract at residues Lys-324–Gln-389 is disordered. Residues Gly-337–Ile-348 show a composition bias toward polar residues. Pro residues predominate over residues Pro-352 to Ala-361.

As to quaternary structure, interacts with KDR. Interacts with TXK and ITK. Phosphorylated on tyrosine residues. As to expression, expression limited to tissues of the immune system and, in particular, activated T-cells. Expressed in peripheral blood leukocytes, thymus and spleen. Much lower expression or undetectable, in brain, placenta, skeletal muscle, prostate, testis, ovary, small intestine, and colon. Expressed at low levels in unstimulated T-cells, but not expressed in normal resting or activated B-cells. According to PubMed:10692392, expression is not restricted to activated T-cells, but strongly expressed in blood cell lineages, the endothelium and other cell and tissue types, such as heart, lung, and liver.

The protein localises to the cytoplasm. Functionally, could be a T-cell-specific adapter protein involved in the control of T-cell activation. May play a role in the CD4-p56-LCK-dependent signal transduction pathway. Could also play an important role in normal and pathological angiogenesis. Could be an adapter protein that facilitates and regulates interaction of KDR with effector proteins important to endothelial cell survival and proliferation. This Homo sapiens (Human) protein is SH2 domain-containing protein 2A (SH2D2A).